A 317-amino-acid chain; its full sequence is SWI/SNF-related matrix-associated actin-dependent regulator of chromatin subfamily E member 1-related (317 aa).

The span at 1 to 17 shows a compositional bias: low complexity; that stretch reads MSHGPKQPGAAAAPAGG. Positions 1-71 are disordered; that stretch reads MSHGPKQPGA…RKKILPNGPK (71 aa). A Glycyl lysine isopeptide (Lys-Gly) (interchain with G-Cter in SUMO2) cross-link involves residue K31. The segment covering 31 to 52 has biased composition (basic and acidic residues); sequence KQERGEGPRAGEKGSHEEEPVK. A compositionally biased stretch (basic residues) spans 53–65; it reads KRGWPKGKKRKKI. Residues 70–138 constitute a DNA-binding region (HMG box); it reads PKAPVTGYVR…QYMKELRAYQ (69 aa). S160 is subject to Phosphoserine. Residues 190-257 adopt a coiled-coil conformation; the sequence is EEFLDQNKAR…LQQQLQAVRQ (68 aa).

Component of a BHC histone deacetylase complex that contains HDAC1, HDAC2, HMG20B/BRAF35, KDM1A, RCOR1/CoREST and PHF21A/BHC80. The BHC complex may also contain ZMYM2, ZNF217, ZMYM3, GSE1 and GTF2I. Interacts with the BRCA2 tumor suppressor protein. Interacts with DTNB. Ubiquitously expressed in adult tissues.

It is found in the nucleus. Its subcellular location is the chromosome. In terms of biological role, required for correct progression through G2 phase of the cell cycle and entry into mitosis. Required for RCOR1/CoREST mediated repression of neuronal specific gene promoters. In Homo sapiens (Human), this protein is SWI/SNF-related matrix-associated actin-dependent regulator of chromatin subfamily E member 1-related (HMG20B).